A 396-amino-acid chain; its full sequence is Activity-regulated cytoskeleton-associated protein (396 aa).

A coiled-coil region spans residues 54 to 78 (SKQVERELKGLHRSVGKLESNLDGY). The interval 89–100 (KSIKACLCRCQE) is interaction with SH3GL1 or SH3GL3. An interaction with DNM2 region spans residues 195 to 214 (QPWVPGEDGQPSPGVDTQIF). S260 is modified (phosphoserine). Glycyl lysine isopeptide (Lys-Gly) (interchain with G-Cter in ubiquitin) cross-links involve residues K268 and K269. A Phosphothreonine modification is found at T278. Positions 356–396 (QDDLEQAAEPAGPHLPVEDEAETLTPAPNSESVASDRTQPE) are disordered. The segment covering 381 to 396 (PAPNSESVASDRTQPE) has biased composition (polar residues).

Belongs to the ARC/ARG3.1 family. As to quaternary structure, homooligomer; homooligomerizes into virion-like capsids. Interacts with SH3GL1/endophilin-2, SH3GL3/endophilin-3 and DNM2/DYN2. Interacts with CAMK2B (in the kinase inactive state); leading to target ARC to inactive synapses. Interacts with PSEN1. Palmitoylation anchors the protein into the membrane by allowing direct insertion into the hydrophobic core of the lipid bilayer. Post-translationally, ubiquitinated by UBE3A, leading to its degradation by the proteasome, thereby promoting AMPA receptors (AMPARs) expression at synapses. Ubiquitinated by RNF216 at Lys-268 and Lys-269 limiting ARC protein levels induced by synaptic activity and thus regulating ARC-dependent forms of synaptic plasticity. In terms of processing, phosphorylation at Ser-260 by CaMK2 prevents homooligomerization into virion-like capsids by disrupting an interaction surface essential for high-order oligomerization. Phosphorylation by CaMK2 inhibits synaptic activity.

It is found in the extracellular vesicle membrane. Its subcellular location is the postsynaptic cell membrane. The protein resides in the synapse. It localises to the postsynaptic density. The protein localises to the early endosome membrane. It is found in the cell projection. Its subcellular location is the dendrite. The protein resides in the cytoplasm. It localises to the cytoskeleton. The protein localises to the cell cortex. It is found in the dendritic spine. Its subcellular location is the cytoplasmic vesicle. The protein resides in the secretory vesicle. It localises to the acrosome. The protein localises to the clathrin-coated vesicle membrane. In terms of biological role, master regulator of synaptic plasticity that self-assembles into virion-like capsids that encapsulate RNAs and mediate intercellular RNA transfer in the nervous system. ARC protein is released from neurons in extracellular vesicles that mediate the transfer of ARC mRNA into new target cells, where ARC mRNA can undergo activity-dependent translation. ARC capsids are endocytosed and are able to transfer ARC mRNA into the cytoplasm of neurons. Acts as a key regulator of synaptic plasticity: required for protein synthesis-dependent forms of long-term potentiation (LTP) and depression (LTD) and for the formation of long-term memory. Regulates synaptic plasticity by promoting endocytosis of AMPA receptors (AMPARs) in response to synaptic activity: this endocytic pathway maintains levels of surface AMPARs in response to chronic changes in neuronal activity through synaptic scaling, thereby contributing to neuronal homeostasis. Acts as a postsynaptic mediator of activity-dependent synapse elimination in the developing cerebellum by mediating elimination of surplus climbing fiber synapses. Accumulates at weaker synapses, probably to prevent their undesired enhancement. This suggests that ARC-containing virion-like capsids may be required to eliminate synaptic material. Required to transduce experience into long-lasting changes in visual cortex plasticity and for long-term memory. Involved in postsynaptic trafficking and processing of amyloid-beta A4 (APP) via interaction with PSEN1. In addition to its role in synapses, also involved in the regulation of the immune system: specifically expressed in skin-migratory dendritic cells and regulates fast dendritic cell migration, thereby regulating T-cell activation. This is Activity-regulated cytoskeleton-associated protein from Homo sapiens (Human).